The primary structure comprises 288 residues: ATP phosphoribosyltransferase (288 aa).

It belongs to the ATP phosphoribosyltransferase family. Long subfamily. The cofactor is Mg(2+).

It localises to the cytoplasm. The enzyme catalyses 1-(5-phospho-beta-D-ribosyl)-ATP + diphosphate = 5-phospho-alpha-D-ribose 1-diphosphate + ATP. Its pathway is amino-acid biosynthesis; L-histidine biosynthesis; L-histidine from 5-phospho-alpha-D-ribose 1-diphosphate: step 1/9. With respect to regulation, feedback inhibited by histidine. Its function is as follows. Catalyzes the condensation of ATP and 5-phosphoribose 1-diphosphate to form N'-(5'-phosphoribosyl)-ATP (PR-ATP). Has a crucial role in the pathway because the rate of histidine biosynthesis seems to be controlled primarily by regulation of HisG enzymatic activity. The protein is ATP phosphoribosyltransferase of Methanococcus maripaludis (strain DSM 14266 / JCM 13030 / NBRC 101832 / S2 / LL).